A 118-amino-acid chain; its full sequence is MPAINKTKGSADRIKMKIRKGDTVQVISGKDKGKTGEVLKTLPYENRVLVQGINQRTKHVKPSQEGETGRIETKEFSLHASNVMIYSTKEKVASKVEIFVDKDGSKKRRLKKTGELID.

The protein belongs to the universal ribosomal protein uL24 family. Part of the 50S ribosomal subunit.

In terms of biological role, one of two assembly initiator proteins, it binds directly to the 5'-end of the 23S rRNA, where it nucleates assembly of the 50S subunit. One of the proteins that surrounds the polypeptide exit tunnel on the outside of the subunit. This chain is Large ribosomal subunit protein uL24, found in Prochlorococcus marinus (strain NATL2A).